The sequence spans 145 residues: Large ribosomal subunit protein uL13 (145 aa).

It belongs to the universal ribosomal protein uL13 family. Part of the 50S ribosomal subunit.

This protein is one of the early assembly proteins of the 50S ribosomal subunit, although it is not seen to bind rRNA by itself. It is important during the early stages of 50S assembly. The chain is Large ribosomal subunit protein uL13 from Bacillus velezensis (strain DSM 23117 / BGSC 10A6 / LMG 26770 / FZB42) (Bacillus amyloliquefaciens subsp. plantarum).